Here is a 401-residue protein sequence, read N- to C-terminus: Collagen and calcium-binding EGF domain-containing protein 1 (401 aa).

An N-terminal signal peptide occupies residues methionine 1 to glycine 22. An EGF-like; calcium-binding domain is found at aspartate 126–threonine 167. 3 disulfides stabilise this stretch: cysteine 130–cysteine 142, cysteine 138–cysteine 151, and cysteine 153–cysteine 166. Residue asparagine 134 is glycosylated (N-linked (GlcNAc...) asparagine). Disordered stretches follow at residues threonine 229–phenylalanine 321 and serine 344–valine 401. 2 Collagen-like domains span residues leucine 234–proline 276 and glycine 286–glycine 319. Residues proline 235–alanine 244 are compositionally biased toward pro residues. A compositionally biased stretch (low complexity) spans threonine 246 to glutamine 258.

It belongs to the CCBE1 family. In terms of tissue distribution, not expressed in blood or lymphatic endothelial cells, correlating spatially and temporally with the migration routes of endothelial cells that bud from the PCV, migrate in association with somite boundaries and seed the horizontal myoseptum region from where lymphatic precursors later migrate.

The protein localises to the secreted. Required for lymphangioblast budding and angiogenic sprouting from venous endothelium during embryogenesis. Required for the formation of facial lymphatic structures. Necessary for lymphangiogenesis, but is probably not part of either the vegfc-vegfr3 signaling or sox18-prox1 transcriptional pathways. The chain is Collagen and calcium-binding EGF domain-containing protein 1 (ccbe1) from Danio rerio (Zebrafish).